The chain runs to 539 residues: Chaperonin GroEL (539 aa).

ATP is bound by residues 30 to 33, lysine 51, 87 to 91, glycine 415, 479 to 481, and aspartate 495; these read TLGP, DGTTT, and NAA.

The protein belongs to the chaperonin (HSP60) family. As to quaternary structure, forms a cylinder of 14 subunits composed of two heptameric rings stacked back-to-back. Interacts with the co-chaperonin GroES.

It is found in the cytoplasm. It carries out the reaction ATP + H2O + a folded polypeptide = ADP + phosphate + an unfolded polypeptide.. Its function is as follows. Together with its co-chaperonin GroES, plays an essential role in assisting protein folding. The GroEL-GroES system forms a nano-cage that allows encapsulation of the non-native substrate proteins and provides a physical environment optimized to promote and accelerate protein folding. In Kluyvera intermedia (Enterobacter intermedius), this protein is Chaperonin GroEL.